A 20-amino-acid polypeptide reads, in one-letter code: Dihydroorotase-like protein (20 aa).

This sequence belongs to the metallo-dependent hydrolases superfamily. DHOase family. PyrC' subfamily. As to quaternary structure, heterododecamer of 6 active PyrB subunits and 6 non-catalytic PyrC' subunits.

Non-functional DHOase. The polypeptide is Dihydroorotase-like protein (pyrC') (Pseudomonas fluorescens biotype A).